The chain runs to 123 residues: Small ribosomal subunit protein uS12 (123 aa).

Positions 1 to 32 (MPTIQQLVRKGRKTKVSKNKTPALKGSPQRRG) are disordered. A compositionally biased stretch (basic residues) spans 9–18 (RKGRKTKVSK). Position 89 is a 3-methylthioaspartic acid (D89).

The protein belongs to the universal ribosomal protein uS12 family. As to quaternary structure, part of the 30S ribosomal subunit. Contacts proteins S8 and S17. May interact with IF1 in the 30S initiation complex.

With S4 and S5 plays an important role in translational accuracy. In terms of biological role, interacts with and stabilizes bases of the 16S rRNA that are involved in tRNA selection in the A site and with the mRNA backbone. Located at the interface of the 30S and 50S subunits, it traverses the body of the 30S subunit contacting proteins on the other side and probably holding the rRNA structure together. The combined cluster of proteins S8, S12 and S17 appears to hold together the shoulder and platform of the 30S subunit. In Thermobifida fusca (strain YX), this protein is Small ribosomal subunit protein uS12.